The following is a 569-amino-acid chain: Proline--tRNA ligase (569 aa).

It belongs to the class-II aminoacyl-tRNA synthetase family. ProS type 1 subfamily. Homodimer.

The protein resides in the cytoplasm. It catalyses the reaction tRNA(Pro) + L-proline + ATP = L-prolyl-tRNA(Pro) + AMP + diphosphate. Catalyzes the attachment of proline to tRNA(Pro) in a two-step reaction: proline is first activated by ATP to form Pro-AMP and then transferred to the acceptor end of tRNA(Pro). As ProRS can inadvertently accommodate and process non-cognate amino acids such as alanine and cysteine, to avoid such errors it has two additional distinct editing activities against alanine. One activity is designated as 'pretransfer' editing and involves the tRNA(Pro)-independent hydrolysis of activated Ala-AMP. The other activity is designated 'posttransfer' editing and involves deacylation of mischarged Ala-tRNA(Pro). The misacylated Cys-tRNA(Pro) is not edited by ProRS. This chain is Proline--tRNA ligase, found in Lactiplantibacillus plantarum (strain ATCC BAA-793 / NCIMB 8826 / WCFS1) (Lactobacillus plantarum).